The chain runs to 148 residues: Ribonuclease H (148 aa).

Positions 1 to 142 constitute an RNase H type-1 domain; sequence MSDSVEIYTD…ADQLANRGVD (142 aa). Positions 10, 48, 70, and 134 each coordinate Mg(2+). A disordered region spans residues 129-148; that stretch reads GNERADQLANRGVDEVRAQR.

This sequence belongs to the RNase H family. In terms of assembly, monomer. It depends on Mg(2+) as a cofactor.

It localises to the cytoplasm. The catalysed reaction is Endonucleolytic cleavage to 5'-phosphomonoester.. In terms of biological role, endonuclease that specifically degrades the RNA of RNA-DNA hybrids. In Pseudomonas entomophila (strain L48), this protein is Ribonuclease H.